The primary structure comprises 150 residues: Arginine repressor (150 aa).

Belongs to the ArgR family.

It is found in the cytoplasm. It functions in the pathway amino-acid biosynthesis; L-arginine biosynthesis [regulation]. Its function is as follows. Regulates arginine biosynthesis genes. This chain is Arginine repressor, found in Symbiobacterium thermophilum (strain DSM 24528 / JCM 14929 / IAM 14863 / T).